We begin with the raw amino-acid sequence, 393 residues long: Elongation factor Tu (393 aa).

In terms of domain architecture, tr-type G spans 10–202 (KPHVNIGTIG…AVDEYIPTPE (193 aa)). Residues 19 to 26 (GHVDHGKT) are G1. 19–26 (GHVDHGKT) contributes to the GTP binding site. Mg(2+) is bound at residue Thr-26. Residues 60 to 64 (GITIN) form a G2 region. The segment at 81-84 (DCPG) is G3. Residues 81–85 (DCPGH) and 136–139 (NKAD) contribute to the GTP site. Residues 136 to 139 (NKAD) form a G4 region. The tract at residues 174–176 (SAL) is G5.

Belongs to the TRAFAC class translation factor GTPase superfamily. Classic translation factor GTPase family. EF-Tu/EF-1A subfamily. Monomer.

The protein localises to the cytoplasm. The catalysed reaction is GTP + H2O = GDP + phosphate + H(+). Its function is as follows. GTP hydrolase that promotes the GTP-dependent binding of aminoacyl-tRNA to the A-site of ribosomes during protein biosynthesis. The polypeptide is Elongation factor Tu (Clostridium novyi (strain NT)).